Reading from the N-terminus, the 146-residue chain is Ecotin-like protein 1 (146 aa).

Belongs to the protease inhibitor I11 (ecotin) family.

The polypeptide is Ecotin-like protein 1 (ISP1) (Leishmania braziliensis).